The chain runs to 213 residues: ATP synthase peripheral stalk subunit OSCP, mitochondrial (213 aa).

Residues 1–23 (MAALAVSGLSQQVRCFSTSVVRP) constitute a mitochondrion transit peptide. Positions 5–23 (AVSGLSQQVRCFSTSVVRP) match the SIFI-degron motif. An N6-acetyllysine mark is found at Lys54, Lys60, Lys70, and Lys73. An N6-succinyllysine modification is found at Lys90. An N6-acetyllysine; alternate mark is found at Lys100, Lys158, and Lys162. An N6-succinyllysine; alternate mark is found at Lys100, Lys158, and Lys162. 3 positions are modified to N6-acetyllysine: Lys172, Lys176, and Lys192. At Lys199 the chain carries N6-succinyllysine.

The protein belongs to the ATPase delta chain family. As to quaternary structure, component of the ATP synthase complex composed at least of ATP5F1A/subunit alpha, ATP5F1B/subunit beta, ATP5MC1/subunit c (homooctomer), MT-ATP6/subunit a, MT-ATP8/subunit 8, ATP5ME/subunit e, ATP5MF/subunit f, ATP5MG/subunit g, ATP5MK/subunit k, ATP5MJ/subunit j, ATP5F1C/subunit gamma, ATP5F1D/subunit delta, ATP5F1E/subunit epsilon, ATP5PF/subunit F6, ATP5PB/subunit b, ATP5PD/subunit d, ATP5PO/subunit OSCP. ATP synthase complex consists of a soluble F(1) head domain (subunits alpha(3) and beta(3)) - the catalytic core - and a membrane F(0) domain - the membrane proton channel (subunits c, a, 8, e, f, g, k and j). These two domains are linked by a central stalk (subunits gamma, delta, and epsilon) rotating inside the F1 region and a stationary peripheral stalk (subunits F6, b, d, and OSCP). Post-translationally, acetylation at Lys-162 decreases ATP production. Deacetylated by SIRT3. In response to mitochondrial stress, the precursor protein is ubiquitinated by the SIFI complex in the cytoplasm before mitochondrial import, leading to its degradation. Within the SIFI complex, UBR4 initiates ubiquitin chain that are further elongated or branched by KCMF1.

The protein localises to the mitochondrion. The protein resides in the mitochondrion inner membrane. Subunit OSCP, of the mitochondrial membrane ATP synthase complex (F(1)F(0) ATP synthase or Complex V) that produces ATP from ADP in the presence of a proton gradient across the membrane which is generated by electron transport complexes of the respiratory chain. ATP synthase complex consist of a soluble F(1) head domain - the catalytic core - and a membrane F(1) domain - the membrane proton channel. These two domains are linked by a central stalk rotating inside the F(1) region and a stationary peripheral stalk. During catalysis, ATP synthesis in the catalytic domain of F(1) is coupled via a rotary mechanism of the central stalk subunits to proton translocation. In vivo, can only synthesize ATP although its ATP hydrolase activity can be activated artificially in vitro. Part of the complex F(0) domain. Part of the complex F(0) domain and the peripheric stalk, which acts as a stator to hold the catalytic alpha(3)beta(3) subcomplex and subunit a/ATP6 static relative to the rotary elements. The chain is ATP synthase peripheral stalk subunit OSCP, mitochondrial from Bos taurus (Bovine).